Reading from the N-terminus, the 190-residue chain is Acireductone dioxygenase (190 aa).

Residues His-101, His-103, Glu-107, and His-145 each coordinate Fe(2+). Positions 101, 103, 107, and 145 each coordinate Ni(2+).

Belongs to the acireductone dioxygenase (ARD) family. In terms of assembly, monomer. It depends on Fe(2+) as a cofactor. Ni(2+) is required as a cofactor.

The enzyme catalyses 1,2-dihydroxy-5-(methylsulfanyl)pent-1-en-3-one + O2 = 3-(methylsulfanyl)propanoate + CO + formate + 2 H(+). It catalyses the reaction 1,2-dihydroxy-5-(methylsulfanyl)pent-1-en-3-one + O2 = 4-methylsulfanyl-2-oxobutanoate + formate + 2 H(+). It functions in the pathway amino-acid biosynthesis; L-methionine biosynthesis via salvage pathway; L-methionine from S-methyl-5-thio-alpha-D-ribose 1-phosphate: step 5/6. Functionally, catalyzes 2 different reactions between oxygen and the acireductone 1,2-dihydroxy-3-keto-5-methylthiopentene (DHK-MTPene) depending upon the metal bound in the active site. Fe-containing acireductone dioxygenase (Fe-ARD) produces formate and 2-keto-4-methylthiobutyrate (KMTB), the alpha-ketoacid precursor of methionine in the methionine recycle pathway. Ni-containing acireductone dioxygenase (Ni-ARD) produces methylthiopropionate, carbon monoxide and formate, and does not lie on the methionine recycle pathway. This chain is Acireductone dioxygenase, found in Saccharopolyspora erythraea (strain ATCC 11635 / DSM 40517 / JCM 4748 / NBRC 13426 / NCIMB 8594 / NRRL 2338).